The following is a 301-amino-acid chain: Acetaldehyde dehydrogenase (301 aa).

Cys130 serves as the catalytic Acyl-thioester intermediate. NAD(+) contacts are provided by residues 161 to 169 and Asn272; that span reads SVGPGTRRN.

This sequence belongs to the acetaldehyde dehydrogenase family.

It carries out the reaction acetaldehyde + NAD(+) + CoA = acetyl-CoA + NADH + H(+). The sequence is that of Acetaldehyde dehydrogenase (mhpF) from Cupriavidus taiwanensis (strain DSM 17343 / BCRC 17206 / CCUG 44338 / CIP 107171 / LMG 19424 / R1) (Ralstonia taiwanensis (strain LMG 19424)).